The primary structure comprises 499 residues: Cytochrome P450 77A1 (499 aa).

Cys-443 is a heme binding site.

It belongs to the cytochrome P450 family. It depends on heme as a cofactor.

The chain is Cytochrome P450 77A1 (CYP77A1) from Solanum melongena (Eggplant).